The primary structure comprises 143 residues: Small ribosomal subunit protein uS11c (143 aa).

This sequence belongs to the universal ribosomal protein uS11 family. In terms of assembly, part of the 30S ribosomal subunit.

The protein localises to the plastid. The protein resides in the chloroplast. The sequence is that of Small ribosomal subunit protein uS11c from Oryza nivara (Indian wild rice).